The primary structure comprises 237 residues: CDP-diacylglycerol--inositol 3-phosphatidyltransferase (237 aa).

The Cytoplasmic segment spans residues 1-12 (MGKNEQKDPNVY). Residues 13–33 (FFVPNLIGFTRVFLVLISLYF) form a helical membrane-spanning segment. Topologically, residues 34–41 (MSWHPNYC) are lumenal. The helical transmembrane segment at 42–62 (TIVYLYSSLLDAFDGWAARKL) threads the bilayer. Mg(2+)-binding residues include aspartate 52 and aspartate 55. A CDP-1,2-diacyl-sn-glycerol-binding residues include glycine 56, arginine 60, and threonine 66. The Cytoplasmic portion of the chain corresponds to 63–71 (HQATNFGAI). Residues 72 to 92 (LDMVTDRCATSCLLCFLCAAY) form a helical membrane-spanning segment. Aspartate 73 and aspartate 77 together coordinate Mg(2+). Aspartate 77 (proton acceptor) is an active-site residue. Residues 93-94 (PK) are Lumenal-facing. Residues 95 to 115 (YAIIFQLLVSLDLASHYMHMY) traverse the membrane as a helical segment. Residues 116–144 (STLHQGASSHKTVTKKHNWMLRLYYGNNK) lie on the Cytoplasmic side of the membrane. Residues 145-165 (VLFIFCAANEMFFVALYLLSF) traverse the membrane as a helical segment. Over 166–185 (TPRTPPKLGYLPVPSFIYST) the chain is Lumenal. A helical membrane pass occupies residues 186–206 (GELPLSYPTLLAVLCGPICLA). The Cytoplasmic portion of the chain corresponds to 207-237 (KQIINVVQLVNAANALVKMDVEQRRAAKKLQ).

It belongs to the CDP-alcohol phosphatidyltransferase class-I family. It depends on Mn(2+) as a cofactor. The cofactor is Mg(2+).

Its subcellular location is the microsome membrane. It is found in the endoplasmic reticulum membrane. The protein resides in the golgi apparatus membrane. The protein localises to the mitochondrion outer membrane. It carries out the reaction a CDP-1,2-diacyl-sn-glycerol + myo-inositol = a 1,2-diacyl-sn-glycero-3-phospho-(1D-myo-inositol) + CMP + H(+). In terms of biological role, catalyzes the synthesis of phosphatidylinositol (PtdIns). This chain is CDP-diacylglycerol--inositol 3-phosphatidyltransferase (pis1), found in Schizosaccharomyces pombe (strain 972 / ATCC 24843) (Fission yeast).